The primary structure comprises 359 residues: Histamine H2 receptor (359 aa).

Over 1 to 22 (MAPNGTASSFCLDSTACKITIT) the chain is Extracellular. Residue Asn-4 is glycosylated (N-linked (GlcNAc...) asparagine). The chain crosses the membrane as a helical span at residues 23-44 (VVLAVLILITVAGNVVVCLAVG). The Cytoplasmic segment spans residues 45–57 (LNRRLRNLTNCFI). The helical transmembrane segment at 58-81 (VSLAITDLLLGLLVLPFSAIYQLS) threads the bilayer. Residues 82 to 92 (CKWSFGKVFCN) are Extracellular-facing. A disulfide bond links Cys-91 and Cys-174. A helical transmembrane segment spans residues 93 to 114 (IYTSLDVMLCTASILNLFMISL). Over 115-134 (DRYCAVMDPLRYPVLVTPVR) the chain is Cytoplasmic. Residues 135-159 (VAISLVLIWVISITLSFLSIHLGWN) traverse the membrane as a helical segment. Residues 160–180 (SRNETSKGNHTTSKCKVQVNE) are Extracellular-facing. Residues 181–204 (VYGLVDGLVTFYLPLLIMCITYYR) traverse the membrane as a helical segment. The Cytoplasmic segment spans residues 205 to 234 (IFKVARDQAKRINHISSWKAATIREHKATV). Residues 235–258 (TLAAVMGAFIICWFPYFTAFVYRG) traverse the membrane as a helical segment. At 259–267 (LRGDDAINE) the chain is on the extracellular side. A helical membrane pass occupies residues 268–289 (VLEAIVLWLGYANSALNPILYA). Topologically, residues 290–359 (ALNRDFRTGY…VTAPQGATDR (70 aa)) are cytoplasmic. Cys-305 carries S-palmitoyl cysteine lipidation. Residues 316–340 (SLRSNASQLSRTQSREPRQQEEKPL) form a disordered region. Over residues 317 to 327 (LRSNASQLSRT) the composition is skewed to polar residues. Over residues 328 to 340 (QSREPRQQEEKPL) the composition is skewed to basic and acidic residues.

The protein belongs to the G-protein coupled receptor 1 family.

It localises to the cell membrane. Its function is as follows. The H2 subclass of histamine receptors mediates gastric acid secretion. Also appears to regulate gastrointestinal motility and intestinal secretion. Possible role in regulating cell growth and differentiation. The activity of this receptor is mediated by G proteins which activate adenylyl cyclase and, through a separate G protein-dependent mechanism, the phosphoinositide/protein kinase (PKC) signaling pathway. In Gorilla gorilla gorilla (Western lowland gorilla), this protein is Histamine H2 receptor (HRH2).